The sequence spans 294 residues: Elongation factor Ts (294 aa).

Residues 79-82 (TDFV) are involved in Mg(2+) ion dislocation from EF-Tu.

It belongs to the EF-Ts family.

The protein resides in the cytoplasm. Its function is as follows. Associates with the EF-Tu.GDP complex and induces the exchange of GDP to GTP. It remains bound to the aminoacyl-tRNA.EF-Tu.GTP complex up to the GTP hydrolysis stage on the ribosome. This Shouchella clausii (strain KSM-K16) (Alkalihalobacillus clausii) protein is Elongation factor Ts.